The following is a 178-amino-acid chain: Crossover junction endodeoxyribonuclease RuvC (178 aa).

Active-site residues include D11, E71, and D143. Residues D11, E71, and D143 each contribute to the Mg(2+) site.

This sequence belongs to the RuvC family. As to quaternary structure, homodimer which binds Holliday junction (HJ) DNA. The HJ becomes 2-fold symmetrical on binding to RuvC with unstacked arms; it has a different conformation from HJ DNA in complex with RuvA. In the full resolvosome a probable DNA-RuvA(4)-RuvB(12)-RuvC(2) complex forms which resolves the HJ. Requires Mg(2+) as cofactor.

The protein localises to the cytoplasm. The catalysed reaction is Endonucleolytic cleavage at a junction such as a reciprocal single-stranded crossover between two homologous DNA duplexes (Holliday junction).. The RuvA-RuvB-RuvC complex processes Holliday junction (HJ) DNA during genetic recombination and DNA repair. Endonuclease that resolves HJ intermediates. Cleaves cruciform DNA by making single-stranded nicks across the HJ at symmetrical positions within the homologous arms, yielding a 5'-phosphate and a 3'-hydroxyl group; requires a central core of homology in the junction. The consensus cleavage sequence is 5'-(A/T)TT(C/G)-3'. Cleavage occurs on the 3'-side of the TT dinucleotide at the point of strand exchange. HJ branch migration catalyzed by RuvA-RuvB allows RuvC to scan DNA until it finds its consensus sequence, where it cleaves and resolves the cruciform DNA. This Neisseria meningitidis serogroup B (strain ATCC BAA-335 / MC58) protein is Crossover junction endodeoxyribonuclease RuvC.